Here is a 281-residue protein sequence, read N- to C-terminus: MITSAHIDDIRTQVRAWRAKGETVAFVPTMGNLHQGHITLVKEAAKKCDHVVASIFVNPMQFGQNEDLDAYPRTLEADSQALTAAGAELLFTPTPAIIYPKGLAQQTYVEVPGISDVLCGASRPGHFRGVATIVCKLFNIVQPDIAFFGNKDYQQLLVIRTMVEDLSLPIEIIGIDTIREASGLAMSSRNGYLTAQEKAAAPALKKAIDAMAQGIKQGISIEQVTEEAKASLTAAGFTPDYLEVRHADTLAKAETQDKALVILAAAYLGKARLIDNLRFDR.

30-37 (MGNLHQGH) contributes to the ATP binding site. Catalysis depends on histidine 37, which acts as the Proton donor. Glutamine 61 provides a ligand contact to (R)-pantoate. Glutamine 61 contributes to the beta-alanine binding site. 149-152 (GNKD) contacts ATP. Glutamine 155 is a (R)-pantoate binding site. Residues isoleucine 178 and 186 to 189 (MSSR) each bind ATP.

Belongs to the pantothenate synthetase family. In terms of assembly, homodimer.

The protein localises to the cytoplasm. The catalysed reaction is (R)-pantoate + beta-alanine + ATP = (R)-pantothenate + AMP + diphosphate + H(+). It participates in cofactor biosynthesis; (R)-pantothenate biosynthesis; (R)-pantothenate from (R)-pantoate and beta-alanine: step 1/1. Its function is as follows. Catalyzes the condensation of pantoate with beta-alanine in an ATP-dependent reaction via a pantoyl-adenylate intermediate. This Shewanella oneidensis (strain ATCC 700550 / JCM 31522 / CIP 106686 / LMG 19005 / NCIMB 14063 / MR-1) protein is Pantothenate synthetase.